Reading from the N-terminus, the 797-residue chain is Inactive dipeptidyl peptidase 10 (797 aa).

Residues 1–28 are disordered; it reads MKQEQQPTPGARATQSQPADQELGSNSP. Residues 1–34 are Cytoplasmic-facing; sequence MKQEQQPTPGARATQSQPADQELGSNSPPQRNWK. A helical; Signal-anchor for type II membrane protein transmembrane segment spans residues 35–55; it reads GIAIALLVILVVCSLITMSVI. Residues 56 to 797 lie on the Extracellular side of the membrane; the sequence is LLTPDELTNS…VLPQEPEEDE (742 aa). 4 N-linked (GlcNAc...) asparagine glycosylation sites follow: Asn-64, Asn-91, Asn-112, and Asn-120. Tyr-139 and Tyr-144 each carry phosphotyrosine. Residues Asn-258, Asn-343, Asn-518, and Asn-749 are each glycosylated (N-linked (GlcNAc...) asparagine).

The protein belongs to the peptidase S9B family. DPPIV subfamily. In terms of assembly, may form oligomers. Interacts with KCND1 and KCND2. N-glycosylation is important for cell surface expression, specially at Asn-258, which is crucial. In terms of tissue distribution, detected in brain cortex (at protein level). Expressed in the brain, predominantly by neurons and not by glia.

The protein resides in the cell membrane. Its function is as follows. Promotes cell surface expression of the potassium channel KCND2. Modulates the activity and gating characteristics of the potassium channel KCND2. Has no dipeptidyl aminopeptidase activity. The protein is Inactive dipeptidyl peptidase 10 (Dpp10) of Mus musculus (Mouse).